We begin with the raw amino-acid sequence, 203 residues long: Small ribosomal subunit protein uS5 (203 aa).

Residues 1 to 18 show a composition bias toward basic and acidic residues; sequence MENNVKKETIVDSEKVEK. Positions 1-36 are disordered; that stretch reads MENNVKKETIVDSEKVEKQQPVTAPVVNKKENTQPK. In terms of domain architecture, S5 DRBM spans 49–112; that stretch reads FEERVVKIKR…KNANNNLIKV (64 aa).

This sequence belongs to the universal ribosomal protein uS5 family. Part of the 30S ribosomal subunit. Contacts proteins S4 and S8.

With S4 and S12 plays an important role in translational accuracy. In terms of biological role, located at the back of the 30S subunit body where it stabilizes the conformation of the head with respect to the body. This chain is Small ribosomal subunit protein uS5, found in Ureaplasma urealyticum serovar 10 (strain ATCC 33699 / Western).